A 280-amino-acid polypeptide reads, in one-letter code: Protein lyl-1 (280 aa).

Residues 1-60 (MCPPQAQAEVGPTMTEKAEMVCAPSPAPAPPPKPASPGPPQVEEVGHRGGSSPPRLPPGV) form a disordered region. Pro residues predominate over residues 25–40 (SPAPAPPPKPASPGPP). One can recognise a bHLH domain in the interval 150–202 (ARRVFTNSRERWRQQNVNGAFAELRKLLPTHPPDRKLSKNEVLRLAMKYIGFL). Residues 214–280 (AAGPTPPGPR…EQTALSPEVR (67 aa)) form a disordered region. The span at 229 to 245 (RVPDDGARRGSGRRAEA) shows a compositional bias: basic and acidic residues. Residues 257–267 (PDGSPGGAARP) show a composition bias toward low complexity. Phosphoserine is present on residues Ser260 and Ser276.

As to quaternary structure, efficient DNA binding requires dimerization with another bHLH protein.

The protein resides in the nucleus. This is Protein lyl-1 (LYL1) from Homo sapiens (Human).